Consider the following 864-residue polypeptide: Leucine--tRNA ligase (864 aa).

The 'HIGH' region signature appears at 42 to 52 (PYPSGKLHMGH). The 'KMSKS' region motif lies at 624–628 (KMSKS). Position 627 (Lys627) interacts with ATP.

Belongs to the class-I aminoacyl-tRNA synthetase family.

The protein localises to the cytoplasm. The enzyme catalyses tRNA(Leu) + L-leucine + ATP = L-leucyl-tRNA(Leu) + AMP + diphosphate. The chain is Leucine--tRNA ligase from Burkholderia pseudomallei (strain 1710b).